The primary structure comprises 235 residues: Large ribosomal subunit protein uL1 (235 aa).

It belongs to the universal ribosomal protein uL1 family. Part of the 50S ribosomal subunit.

In terms of biological role, binds directly to 23S rRNA. The L1 stalk is quite mobile in the ribosome, and is involved in E site tRNA release. Functionally, protein L1 is also a translational repressor protein, it controls the translation of the L11 operon by binding to its mRNA. The chain is Large ribosomal subunit protein uL1 from Prochlorococcus marinus (strain NATL1A).